The following is a 210-amino-acid chain: Inner membrane-spanning protein YciB (210 aa).

6 consecutive transmembrane segments (helical) span residues glutamate 12–alanine 32, isoleucine 53–methionine 73, leucine 78–tryptophan 98, leucine 115–phenylalanine 135, tryptophan 153–threonine 173, and phenylalanine 175–glutamine 195.

Belongs to the YciB family.

It localises to the cell inner membrane. In terms of biological role, plays a role in cell envelope biogenesis, maintenance of cell envelope integrity and membrane homeostasis. The sequence is that of Inner membrane-spanning protein YciB from Sinorhizobium medicae (strain WSM419) (Ensifer medicae).